Reading from the N-terminus, the 231-residue chain is Uracil-DNA glycosylase (231 aa).

Aspartate 74 acts as the Proton acceptor in catalysis.

This sequence belongs to the uracil-DNA glycosylase (UDG) superfamily. UNG family.

Its subcellular location is the cytoplasm. It carries out the reaction Hydrolyzes single-stranded DNA or mismatched double-stranded DNA and polynucleotides, releasing free uracil.. In terms of biological role, excises uracil residues from the DNA which can arise as a result of misincorporation of dUMP residues by DNA polymerase or due to deamination of cytosine. In Campylobacter jejuni (strain RM1221), this protein is Uracil-DNA glycosylase.